Here is a 220-residue protein sequence, read N- to C-terminus: Heptaprenyl diphosphate synthase component 1 (220 aa).

As to quaternary structure, heterodimer of component I and II.

The enzyme catalyses 4 isopentenyl diphosphate + (2E,6E)-farnesyl diphosphate = all-trans-heptaprenyl diphosphate + 4 diphosphate. Its function is as follows. Supplies heptaprenyl diphosphate, the precursor for the side chain of the isoprenoid quinone menaquinone-7 (MQ-7). The sequence is that of Heptaprenyl diphosphate synthase component 1 (hepS) from Geobacillus stearothermophilus (Bacillus stearothermophilus).